An 86-amino-acid polypeptide reads, in one-letter code: MVHICRLFVVMGMLMFLSVQFASSQHWSHGWYPGGKREIDVYDPSEVSEEIKLCNAGKCSFLIPQGRNILKTILLDALTRDFQKRK.

An N-terminal signal peptide occupies residues 1–24; it reads MVHICRLFVVMGMLMFLSVQFASS. The residue at position 25 (Gln-25) is a Pyrrolidone carboxylic acid. Gly-34 carries the glycine amide modification.

It belongs to the GnRH family. In terms of tissue distribution, olfactory bulbs, hypothalamus and telencephalon, midbrain and posterior brain areas.

The protein resides in the secreted. Its function is as follows. Stimulates the secretion of gonadotropins. This Carassius auratus (Goldfish) protein is Progonadoliberin IIB (gnrh2b).